The sequence spans 339 residues: Glycerol-3-phosphate dehydrogenase [NAD(P)+] (339 aa).

3 residues coordinate NADPH: serine 11, tryptophan 12, and lysine 109. Lysine 109, glycine 140, and serine 142 together coordinate sn-glycerol 3-phosphate. Position 144 (alanine 144) interacts with NADPH. Sn-glycerol 3-phosphate is bound by residues lysine 195, aspartate 249, serine 259, arginine 260, and asparagine 261. Lysine 195 acts as the Proton acceptor in catalysis. Arginine 260 provides a ligand contact to NADPH. The NADPH site is built by valine 284 and glutamate 286.

It belongs to the NAD-dependent glycerol-3-phosphate dehydrogenase family.

It is found in the cytoplasm. The enzyme catalyses sn-glycerol 3-phosphate + NAD(+) = dihydroxyacetone phosphate + NADH + H(+). It catalyses the reaction sn-glycerol 3-phosphate + NADP(+) = dihydroxyacetone phosphate + NADPH + H(+). The protein operates within membrane lipid metabolism; glycerophospholipid metabolism. Catalyzes the reduction of the glycolytic intermediate dihydroxyacetone phosphate (DHAP) to sn-glycerol 3-phosphate (G3P), the key precursor for phospholipid synthesis. The sequence is that of Glycerol-3-phosphate dehydrogenase [NAD(P)+] from Lactobacillus acidophilus (strain ATCC 700396 / NCK56 / N2 / NCFM).